The chain runs to 767 residues: Granule-bound starch synthase 2, chloroplastic/amyloplastic (767 aa).

The N-terminal 45 residues, 1 to 45, are a transit peptide targeting the chloroplast; it reads MENSILLHSGNQFHPNLPLLALRPKKLSLIHGSSREQMWRIKRVK. 2 disordered regions span residues 160 to 204 and 226 to 268; these read KRDL…SSQE and YMPS…EKPP. Residues 172–188 are compositionally biased toward low complexity; sequence SRSSITASSQISSTVSS. The span at 230–245 shows a compositional bias: basic and acidic residues; sequence LRKESSASHVEQRNEN. Positions 253-262 are enriched in acidic residues; that stretch reads ANEETEDPVN. Lys290 is a binding site for ADP-alpha-D-glucose.

Belongs to the glycosyltransferase 1 family. Bacterial/plant glycogen synthase subfamily.

The protein localises to the plastid. It is found in the chloroplast. The protein resides in the amyloplast. It catalyses the reaction [(1-&gt;4)-alpha-D-glucosyl](n) + ADP-alpha-D-glucose = [(1-&gt;4)-alpha-D-glucosyl](n+1) + ADP + H(+). It participates in glycan biosynthesis; starch biosynthesis. In terms of biological role, accounts for only 10 to 15% of the total soluble starch synthase activity in tubers. The chain is Granule-bound starch synthase 2, chloroplastic/amyloplastic (SS2) from Solanum tuberosum (Potato).